Reading from the N-terminus, the 20-residue chain is Unknown protein NF028 from 2D-PAGE (20 aa).

The chain is Unknown protein NF028 from 2D-PAGE from Naegleria fowleri (Brain eating amoeba).